Reading from the N-terminus, the 438-residue chain is Coenzyme A disulfide reductase (438 aa).

Glycine 8–glutamate 33 contributes to the FAD binding site. Residues threonine 15, glutamine 19, arginine 22, serine 39, and asparagine 42 each contribute to the substrate site. Cysteine 43 serves as the catalytic Nucleophile. Cysteine 43 (redox-active) is an active-site residue. Position 71 (lysine 71) interacts with substrate. An NADP(+)-binding site is contributed by valine 151–asparagine 166. Threonine 267–aspartate 277 contacts FAD. Substrate is bound at residue histidine 299. Tyrosine 419 contributes to the FAD binding site. Lysine 427 lines the substrate pocket.

It belongs to the class-III pyridine nucleotide-disulfide oxidoreductase family. Homodimer. FAD serves as cofactor.

It catalyses the reaction NADP(+) + 2 CoA = CoA-disulfide + NADPH + H(+). Catalyzes specifically the NADPH-dependent reduction of coenzyme A disulfide. This chain is Coenzyme A disulfide reductase, found in Staphylococcus aureus (strain MSSA476).